The primary structure comprises 335 residues: Dihydroorotate dehydrogenase (quinone) (335 aa).

FMN contacts are provided by residues 61–65 (AGLDK) and Thr85. Lys65 lines the substrate pocket. 110–114 (NRMGF) is a binding site for substrate. FMN contacts are provided by Asn138 and Asn171. Asn171 serves as a coordination point for substrate. Ser174 (nucleophile) is an active-site residue. Position 176 (Asn176) interacts with substrate. FMN-binding residues include Lys216 and Thr244. 245–246 (NT) provides a ligand contact to substrate. FMN contacts are provided by residues Gly267, Gly296, and 317–318 (YS).

The protein belongs to the dihydroorotate dehydrogenase family. Type 2 subfamily. Monomer. It depends on FMN as a cofactor.

It is found in the cell membrane. It carries out the reaction (S)-dihydroorotate + a quinone = orotate + a quinol. It participates in pyrimidine metabolism; UMP biosynthesis via de novo pathway; orotate from (S)-dihydroorotate (quinone route): step 1/1. Its function is as follows. Catalyzes the conversion of dihydroorotate to orotate with quinone as electron acceptor. The protein is Dihydroorotate dehydrogenase (quinone) of Pseudoalteromonas atlantica (strain T6c / ATCC BAA-1087).